The chain runs to 207 residues: dITP/XTP pyrophosphatase (207 aa).

Position 7-12 (7-12) interacts with substrate; it reads SNNAKK. Asp-72 acts as the Proton acceptor in catalysis. Asp-72 contacts Mg(2+). Substrate is bound by residues Ser-73, 155 to 158, Lys-184, and 189 to 190; these read FGYD and HR.

The protein belongs to the HAM1 NTPase family. Homodimer. It depends on Mg(2+) as a cofactor.

The catalysed reaction is XTP + H2O = XMP + diphosphate + H(+). It carries out the reaction dITP + H2O = dIMP + diphosphate + H(+). The enzyme catalyses ITP + H2O = IMP + diphosphate + H(+). Functionally, pyrophosphatase that catalyzes the hydrolysis of nucleoside triphosphates to their monophosphate derivatives, with a high preference for the non-canonical purine nucleotides XTP (xanthosine triphosphate), dITP (deoxyinosine triphosphate) and ITP. Seems to function as a house-cleaning enzyme that removes non-canonical purine nucleotides from the nucleotide pool, thus preventing their incorporation into DNA/RNA and avoiding chromosomal lesions. The chain is dITP/XTP pyrophosphatase from Corynebacterium efficiens (strain DSM 44549 / YS-314 / AJ 12310 / JCM 11189 / NBRC 100395).